The chain runs to 327 residues: Cyclic AMP-responsive element-binding protein 1 (327 aa).

Disordered regions lie at residues 1 to 26 (MTME…QQMT) and 94 to 113 (SEDS…RREI). In terms of domain architecture, KID spans 87–146 (QISTIAESEDSQESVDSVTDSQKRREILSRRPSYRKILNDLSSDAPGVPRIEEEKSEEET). At S119 the chain carries Phosphoserine; by CaMK1, CaMK2, CaMK4, PKB/AKT1 or PKB/AKT2, RPS6KA3, RPS6KA4, RPS6KA5, SGK1 and TSSK4. K122 is covalently cross-linked (Glycyl lysine isopeptide (Lys-Gly) (interchain with G-Cter in SUMO2)). The disordered stretch occupies residues 125–148 (NDLSSDAPGVPRIEEEKSEEETSA). S128 bears the Phosphoserine mark. Phosphoserine; by HIPK2 is present on S257. Positions 269 to 327 (ARKREVRLMKNREAARECRRKKKEYVKCLENRVAVLENQNKTLIEELKALKDLYCHKSD) constitute a bZIP domain. Residues 270-295 (RKREVRLMKNREAARECRRKKKEYVK) are basic motif. Residues K271 and K290 each participate in a glycyl lysine isopeptide (Lys-Gly) (interchain with G-Cter in SUMO1) cross-link. The leucine-zipper stretch occupies residues 297–318 (LENRVAVLENQNKTLIEELKAL).

This sequence belongs to the bZIP family. In terms of assembly, interacts with PPRC1. Binds DNA as a dimer. This dimer is stabilized by magnesium ions. Interacts, through the bZIP domain, with the coactivators CRTC1/TORC1, CRTC2/TORC2 and CRTC3/TORC3. When phosphorylated on Ser-119, binds CREBBP. Interacts with CREBL2; regulates CREB1 phosphorylation, stability and transcriptional activity. Interacts (phosphorylated form) with TOX3. Interacts with ARRB1. Binds to HIPK2. Interacts with SGK1. Interacts with TSSK4; this interaction facilitates phosphorylation on Ser-119. Forms a complex with KMT2A and CREBBP. Interacts with TOX4; CREB1 is required for full induction of TOX4-dependent activity and the interaction is increased by cAMP and inhibited by insulin. As to quaternary structure, (Microbial infection) Interacts with hepatitis B virus/HBV protein X. (Microbial infection) Interacts with HTLV-1 protein Tax. Stimulated by phosphorylation. Phosphorylation of both Ser-119 and Ser-128 in the SCN regulates the activity of CREB and participates in circadian rhythm generation. Phosphorylation of Ser-119 allows CREBBP binding. In liver, phosphorylation is induced by fasting or glucagon in a circadian fashion. CREBL2 positively regulates phosphorylation at Ser-119 thereby stimulating CREB1 transcriptional activity. Phosphorylated upon calcium influx by CaMK4 and CaMK2 on Ser-119. CaMK4 is much more potent than CaMK2 in activating CREB. Phosphorylated by CaMK2 on Ser-128. Phosphorylation of Ser-128 blocks CREB-mediated transcription even when Ser-119 is phosphorylated. Phosphorylated by CaMK1. Phosphorylation of Ser-257 by HIPK2 in response to genotoxic stress promotes CREB1 activity, facilitating the recruitment of the coactivator CBP. Phosphorylated at Ser-119 by RPS6KA3, RPS6KA4 and RPS6KA5 in response to mitogenic or stress stimuli. Phosphorylated by TSSK4 on Ser-119. In terms of processing, sumoylated with SUMO1. Sumoylation on Lys-290, but not on Lys-271, is required for nuclear localization of this protein. Sumoylation is enhanced under hypoxia, promoting nuclear localization and stabilization.

It is found in the nucleus. Its function is as follows. Phosphorylation-dependent transcription factor that stimulates transcription upon binding to the DNA cAMP response element (CRE), a sequence present in many viral and cellular promoters. Transcription activation is enhanced by the TORC coactivators which act independently of Ser-119 phosphorylation. Involved in different cellular processes including the synchronization of circadian rhythmicity and the differentiation of adipose cells. Regulates the expression of apoptotic and inflammatory response factors in cardiomyocytes in response to ERFE-mediated activation of AKT signaling. The polypeptide is Cyclic AMP-responsive element-binding protein 1 (CREB1) (Homo sapiens (Human)).